A 183-amino-acid polypeptide reads, in one-letter code: Glutathione-regulated potassium-efflux system ancillary protein KefG (183 aa).

Belongs to the NAD(P)H dehydrogenase (quinone) family. KefG subfamily. In terms of assembly, interacts with KefB.

The protein resides in the cell inner membrane. It carries out the reaction a quinone + NADH + H(+) = a quinol + NAD(+). The enzyme catalyses a quinone + NADPH + H(+) = a quinol + NADP(+). In terms of biological role, regulatory subunit of a potassium efflux system that confers protection against electrophiles. Required for full activity of KefB. The sequence is that of Glutathione-regulated potassium-efflux system ancillary protein KefG from Salmonella enteritidis PT4 (strain P125109).